Here is a 355-residue protein sequence, read N- to C-terminus: Acidic fibroblast growth factor intracellular-binding protein B (355 aa).

As to quaternary structure, interacts with IER2.

The protein localises to the nucleus. Its subcellular location is the endomembrane system. Its function is as follows. Mediates with IER2 FGF-signaling in Kupffer's vesicle ciliogenesis and in the establishment of laterality in the embryo. May be involved in mitogenic function of FGF1. This Danio rerio (Zebrafish) protein is Acidic fibroblast growth factor intracellular-binding protein B.